A 76-amino-acid chain; its full sequence is Acyl carrier protein (76 aa).

One can recognise a Carrier domain in the interval 1 to 76; that stretch reads MSIEERVKKI…SAIDYVQNNQ (76 aa). Ser-36 is subject to O-(pantetheine 4'-phosphoryl)serine.

The protein belongs to the acyl carrier protein (ACP) family. 4'-phosphopantetheine is transferred from CoA to a specific serine of apo-ACP by AcpS. This modification is essential for activity because fatty acids are bound in thioester linkage to the sulfhydryl of the prosthetic group.

The protein resides in the cytoplasm. The protein operates within lipid metabolism; fatty acid biosynthesis. Functionally, carrier of the growing fatty acid chain in fatty acid biosynthesis. This is Acyl carrier protein from Mannheimia succiniciproducens (strain KCTC 0769BP / MBEL55E).